A 73-amino-acid polypeptide reads, in one-letter code: MSSFYTVVGVFIVVSAMSVLFWIMAPKNNQAVWRSTVILTLAMMFLMWAITFLCQLHPLVAPRRSDLRPEFAE.

The Lumenal segment spans residues 1 to 3 (MSS). A helical transmembrane segment spans residues 4-24 (FYTVVGVFIVVSAMSVLFWIM). At 25–35 (APKNNQAVWRS) the chain is on the cytoplasmic side. The chain crosses the membrane as a helical span at residues 36–56 (TVILTLAMMFLMWAITFLCQL). The Lumenal segment spans residues 57 to 73 (HPLVAPRRSDLRPEFAE).

It belongs to the V-ATPase e1/e2 subunit family. In terms of assembly, V-ATPase is a heteromultimeric enzyme composed of a peripheral catalytic V1 complex (components A to H) attached to an integral membrane V0 proton pore complex (components: a, c, c', c'', d, e, f and VOA1).

The protein resides in the vacuole membrane. Functionally, subunit of the V0 complex of vacuolar(H+)-ATPase (V-ATPase), a multisubunit enzyme composed of a peripheral complex (V1) that hydrolyzes ATP and a membrane integral complex (V0) that translocates protons. V-ATPase is responsible for acidifying and maintaining the pH of intracellular compartments. The chain is V-type proton ATPase subunit e (VMA9) from Saccharomyces cerevisiae (strain ATCC 204508 / S288c) (Baker's yeast).